A 230-amino-acid chain; its full sequence is Uracil-DNA glycosylase (230 aa).

The Proton acceptor role is filled by Asp70.

Belongs to the uracil-DNA glycosylase (UDG) superfamily. UNG family.

It is found in the cytoplasm. It carries out the reaction Hydrolyzes single-stranded DNA or mismatched double-stranded DNA and polynucleotides, releasing free uracil.. Functionally, excises uracil residues from the DNA which can arise as a result of misincorporation of dUMP residues by DNA polymerase or due to deamination of cytosine. This is Uracil-DNA glycosylase from Pseudomonas syringae pv. syringae (strain B728a).